A 382-amino-acid chain; its full sequence is S-adenosylmethionine synthase (382 aa).

Histidine 16 lines the ATP pocket. Mg(2+) is bound at residue aspartate 18. Residue glutamate 44 participates in K(+) binding. The L-methionine site is built by glutamate 57 and glutamine 100. The tract at residues 100-110 (QSPDIAQGVDN) is flexible loop. Residues 165–167 (DAK), 231–232 (RF), aspartate 240, 246–247 (RK), and lysine 267 contribute to the ATP site. Residue aspartate 240 participates in L-methionine binding. An L-methionine-binding site is contributed by lysine 271.

It belongs to the AdoMet synthase family. As to quaternary structure, homotetramer; dimer of dimers. The cofactor is Mg(2+). It depends on K(+) as a cofactor.

It localises to the cytoplasm. It carries out the reaction L-methionine + ATP + H2O = S-adenosyl-L-methionine + phosphate + diphosphate. The protein operates within amino-acid biosynthesis; S-adenosyl-L-methionine biosynthesis; S-adenosyl-L-methionine from L-methionine: step 1/1. Its function is as follows. Catalyzes the formation of S-adenosylmethionine (AdoMet) from methionine and ATP. The overall synthetic reaction is composed of two sequential steps, AdoMet formation and the subsequent tripolyphosphate hydrolysis which occurs prior to release of AdoMet from the enzyme. The sequence is that of S-adenosylmethionine synthase from Legionella pneumophila (strain Lens).